We begin with the raw amino-acid sequence, 336 residues long: N-acetyl-gamma-glutamyl-phosphate reductase (336 aa).

C156 is an active-site residue.

It belongs to the NAGSA dehydrogenase family. Type 1 subfamily.

The protein localises to the cytoplasm. It carries out the reaction N-acetyl-L-glutamate 5-semialdehyde + phosphate + NADP(+) = N-acetyl-L-glutamyl 5-phosphate + NADPH + H(+). The protein operates within amino-acid biosynthesis; L-arginine biosynthesis; N(2)-acetyl-L-ornithine from L-glutamate: step 3/4. Catalyzes the NADPH-dependent reduction of N-acetyl-5-glutamyl phosphate to yield N-acetyl-L-glutamate 5-semialdehyde. In Moritella abyssi, this protein is N-acetyl-gamma-glutamyl-phosphate reductase.